Consider the following 852-residue polypeptide: Glutamine--tRNA ligase (852 aa).

A disordered region spans residues 1 to 42; that stretch reads MGAFGWEQDRGAPFSGRSPRILTRMTDAPRPTAGADAPARPP. The segment at 1-635 is glutaminyl-tRNA synthetase; it reads MGAFGWEQDR…ITLKDTWGKQ (635 aa). A compositionally biased stretch (low complexity) spans 28 to 38; sequence APRPTAGADAP. Positions 74 to 84 match the 'HIGH' region motif; the sequence is PDPSGYAHLGH. Residues aspartate 107 and tyrosine 252 each coordinate L-glutamine. A 'KMSKS' region motif is present at residues 308–312; sequence ITSKR. Disordered regions lie at residues 533-562 and 632-681; these read EGEN…TAPV and WGKQ…LTPE. Positions 636–852 are gatB-like; sequence GGGTQQKAEG…LAAALKDALA (217 aa). The segment covering 664–675 has biased composition (low complexity); that stretch reads SSSPAKAHAPKA.

This sequence in the N-terminal section; belongs to the class-I aminoacyl-tRNA synthetase family. In the C-terminal section; belongs to the GatB/GatE family. Monomer.

The protein resides in the cytoplasm. It carries out the reaction tRNA(Gln) + L-glutamine + ATP = L-glutaminyl-tRNA(Gln) + AMP + diphosphate. The chain is Glutamine--tRNA ligase from Deinococcus radiodurans (strain ATCC 13939 / DSM 20539 / JCM 16871 / CCUG 27074 / LMG 4051 / NBRC 15346 / NCIMB 9279 / VKM B-1422 / R1).